We begin with the raw amino-acid sequence, 408 residues long: (R)-2-hydroxyisocaproyl-CoA dehydratase alpha subunit (408 aa).

A substrate-binding site is contributed by Glu-55. [4Fe-4S] cluster contacts are provided by Cys-84, Cys-117, and Cys-346.

It belongs to the FldB/FldC dehydratase alpha/beta subunit family. In terms of assembly, part of the heterodimeric complex HadBC composed of (R)-2-hydroxyisocaproyl-CoA dehydratase alpha (HadB) and beta (HadC) subunit. [4Fe-4S] cluster is required as a cofactor.

It catalyses the reaction (R)-2-hydroxy-4-methylpentanoyl-CoA = 4-methylpent-2-enoyl-CoA + H2O. With respect to regulation, activated by HadI. Involved in the reductive branch of L-leucine fermentation. Catalyzes the irreversible beta/alpha-elimination of water from (R)-2-hydroxyisocaproyl-CoA to yield isocaprenoyl-CoA. This beta/alpha-dehydration depends on the reductive formation of ketyl radicals on the substrate generated by injection of a single electron from the ATP-dependent activator protein HadI. The enzyme is specific for the R-isomer. In Clostridioides difficile (Peptoclostridium difficile), this protein is (R)-2-hydroxyisocaproyl-CoA dehydratase alpha subunit.